We begin with the raw amino-acid sequence, 120 residues long: Ribosome-binding factor A (120 aa).

The protein belongs to the RbfA family. As to quaternary structure, monomer. Binds 30S ribosomal subunits, but not 50S ribosomal subunits or 70S ribosomes.

It is found in the cytoplasm. One of several proteins that assist in the late maturation steps of the functional core of the 30S ribosomal subunit. Associates with free 30S ribosomal subunits (but not with 30S subunits that are part of 70S ribosomes or polysomes). Required for efficient processing of 16S rRNA. May interact with the 5'-terminal helix region of 16S rRNA. The polypeptide is Ribosome-binding factor A (Clostridium botulinum (strain Loch Maree / Type A3)).